We begin with the raw amino-acid sequence, 349 residues long: Isopentenyl-diphosphate delta-isomerase (349 aa).

7–8 (RK) contributes to the substrate binding site. Residues serine 65, 66 to 68 (SMT), serine 96, and asparagine 124 contribute to the FMN site. Position 96–98 (96–98 (SQR)) interacts with substrate. A substrate-binding site is contributed by glutamine 159. Glutamate 160 is a Mg(2+) binding site. FMN is bound by residues lysine 191, threonine 221, 271–273 (GIR), and 292–293 (AA).

It belongs to the IPP isomerase type 2 family. As to quaternary structure, homooctamer. Dimer of tetramers. It depends on FMN as a cofactor. The cofactor is NADPH. Mg(2+) serves as cofactor.

It localises to the cytoplasm. The catalysed reaction is isopentenyl diphosphate = dimethylallyl diphosphate. Functionally, involved in the biosynthesis of isoprenoids. Catalyzes the 1,3-allylic rearrangement of the homoallylic substrate isopentenyl (IPP) to its allylic isomer, dimethylallyl diphosphate (DMAPP). This Synechocystis sp. (strain ATCC 27184 / PCC 6803 / Kazusa) protein is Isopentenyl-diphosphate delta-isomerase.